We begin with the raw amino-acid sequence, 155 residues long: Endoribonuclease YbeY (155 aa).

Zn(2+) contacts are provided by His-110, His-114, and His-120.

It belongs to the endoribonuclease YbeY family. The cofactor is Zn(2+).

The protein localises to the cytoplasm. Its function is as follows. Single strand-specific metallo-endoribonuclease involved in late-stage 70S ribosome quality control and in maturation of the 3' terminus of the 16S rRNA. This is Endoribonuclease YbeY from Deinococcus radiodurans (strain ATCC 13939 / DSM 20539 / JCM 16871 / CCUG 27074 / LMG 4051 / NBRC 15346 / NCIMB 9279 / VKM B-1422 / R1).